Here is a 631-residue protein sequence, read N- to C-terminus: 1-deoxy-D-xylulose-5-phosphate synthase (631 aa).

Residues His87 and 128 to 130 (GHS) contribute to the thiamine diphosphate site. Asp159 is a binding site for Mg(2+). Thiamine diphosphate is bound by residues 160–161 (GA), Asn188, Phe295, and Glu377. A Mg(2+)-binding site is contributed by Asn188.

The protein belongs to the transketolase family. DXPS subfamily. In terms of assembly, homodimer. The cofactor is Mg(2+). Requires thiamine diphosphate as cofactor.

The catalysed reaction is D-glyceraldehyde 3-phosphate + pyruvate + H(+) = 1-deoxy-D-xylulose 5-phosphate + CO2. It participates in metabolic intermediate biosynthesis; 1-deoxy-D-xylulose 5-phosphate biosynthesis; 1-deoxy-D-xylulose 5-phosphate from D-glyceraldehyde 3-phosphate and pyruvate: step 1/1. Its function is as follows. Catalyzes the acyloin condensation reaction between C atoms 2 and 3 of pyruvate and glyceraldehyde 3-phosphate to yield 1-deoxy-D-xylulose-5-phosphate (DXP). The protein is 1-deoxy-D-xylulose-5-phosphate synthase of Pseudomonas entomophila (strain L48).